The following is a 194-amino-acid chain: Imidazoleglycerol-phosphate dehydratase (194 aa).

Belongs to the imidazoleglycerol-phosphate dehydratase family.

Its subcellular location is the cytoplasm. It catalyses the reaction D-erythro-1-(imidazol-4-yl)glycerol 3-phosphate = 3-(imidazol-4-yl)-2-oxopropyl phosphate + H2O. It participates in amino-acid biosynthesis; L-histidine biosynthesis; L-histidine from 5-phospho-alpha-D-ribose 1-diphosphate: step 6/9. This Thermus thermophilus (strain ATCC 27634 / DSM 579 / HB8) protein is Imidazoleglycerol-phosphate dehydratase.